The sequence spans 305 residues: Olfactory receptor 5M11 (305 aa).

At 1-25 (MSNTNGSAITEFILLGLTDCPELQS) the chain is on the extracellular side. Residue asparagine 5 is glycosylated (N-linked (GlcNAc...) asparagine). Residues 26–46 (LLFVLFLVVYLVTLLGNLGMI) form a helical membrane-spanning segment. Residues 47-54 (MLMRLDSR) lie on the Cytoplasmic side of the membrane. Residues 55-75 (LHTPMYFFLTNLAFVDLCYTS) traverse the membrane as a helical segment. Residues 76 to 98 (NATPQMSTNIVSEKTISFAGCFT) lie on the Extracellular side of the membrane. Cysteines 96 and 188 form a disulfide. The helical transmembrane segment at 99 to 119 (QCYIFIALLLTEFYMLAAMAY) threads the bilayer. At 120-138 (DRYVAIYDPLRYSVKTSRR) the chain is on the cytoplasmic side. Residues 139–159 (VCICLATFPYVYGFSDGLFQA) form a helical membrane-spanning segment. The Extracellular portion of the chain corresponds to 160–195 (ILTFRLTFCRSSVINHFYCADPPLIKLSCSDTYVKE). The chain crosses the membrane as a helical span at residues 196 to 216 (HAMFISAGFNLSSSLTIVLVS). Topologically, residues 217–236 (YAFILAAILRIKSAEGRHKA) are cytoplasmic. The helical transmembrane segment at 237 to 257 (FSTCGSHMMAVTLFYGTLFCM) threads the bilayer. The Extracellular segment spans residues 258-270 (YIRPPTDKTVEES). The chain crosses the membrane as a helical span at residues 271 to 291 (KIIAVFYTFVSPVLNPLIYSL). At 292 to 305 (RNKDVKQALKNVLR) the chain is on the cytoplasmic side.

This sequence belongs to the G-protein coupled receptor 1 family.

Its subcellular location is the cell membrane. Functionally, odorant receptor. The sequence is that of Olfactory receptor 5M11 (OR5M11) from Homo sapiens (Human).